Reading from the N-terminus, the 189-residue chain is Probable nicotinate-nucleotide adenylyltransferase (189 aa).

It belongs to the NadD family.

The enzyme catalyses nicotinate beta-D-ribonucleotide + ATP + H(+) = deamido-NAD(+) + diphosphate. Its pathway is cofactor biosynthesis; NAD(+) biosynthesis; deamido-NAD(+) from nicotinate D-ribonucleotide: step 1/1. Functionally, catalyzes the reversible adenylation of nicotinate mononucleotide (NaMN) to nicotinic acid adenine dinucleotide (NaAD). The sequence is that of Probable nicotinate-nucleotide adenylyltransferase from Ruegeria sp. (strain TM1040) (Silicibacter sp.).